The primary structure comprises 251 residues: Imidazole glycerol phosphate synthase subunit HisF (251 aa).

Catalysis depends on residues Asp-11 and Asp-130.

This sequence belongs to the HisA/HisF family. In terms of assembly, heterodimer of HisH and HisF.

The protein resides in the cytoplasm. The catalysed reaction is 5-[(5-phospho-1-deoxy-D-ribulos-1-ylimino)methylamino]-1-(5-phospho-beta-D-ribosyl)imidazole-4-carboxamide + L-glutamine = D-erythro-1-(imidazol-4-yl)glycerol 3-phosphate + 5-amino-1-(5-phospho-beta-D-ribosyl)imidazole-4-carboxamide + L-glutamate + H(+). The protein operates within amino-acid biosynthesis; L-histidine biosynthesis; L-histidine from 5-phospho-alpha-D-ribose 1-diphosphate: step 5/9. IGPS catalyzes the conversion of PRFAR and glutamine to IGP, AICAR and glutamate. The HisF subunit catalyzes the cyclization activity that produces IGP and AICAR from PRFAR using the ammonia provided by the HisH subunit. This Metallosphaera sedula (strain ATCC 51363 / DSM 5348 / JCM 9185 / NBRC 15509 / TH2) protein is Imidazole glycerol phosphate synthase subunit HisF.